The chain runs to 255 residues: SLA class II histocompatibility antigen, DQ haplotype D alpha chain (255 aa).

An N-terminal signal peptide occupies residues 1–23 (MVPGRVLMWGALALTAVMSACGG). Residues 24–120 (EDIAADHVAS…QVPEVTVFPK (97 aa)) are alpha-1. Over 24-217 (EDIAADHVAS…IPAPMSELTE (194 aa)) the chain is Extracellular. 2 N-linked (GlcNAc...) asparagine glycosylation sites follow: N104 and N144. Residues 113–205 (PEVTVFPKSP…LDKPLLKHWE (93 aa)) enclose the Ig-like C1-type domain. The tract at residues 121–204 (SPVMLGQPNT…GLDKPLLKHW (84 aa)) is alpha-2. Cysteines 133 and 189 form a disulfide. Residues 205 to 217 (EPEIPAPMSELTE) are connecting peptide. A helical transmembrane segment spans residues 218–240 (TVVCALGLIVGLVGIVVGTVFII). Residues 241–255 (QGLRSGGPSRHQGSL) lie on the Cytoplasmic side of the membrane.

The protein belongs to the MHC class II family.

The protein localises to the membrane. The polypeptide is SLA class II histocompatibility antigen, DQ haplotype D alpha chain (Sus scrofa (Pig)).